We begin with the raw amino-acid sequence, 418 residues long: IQ domain-containing protein C (418 aa).

Residues 6–35 form the IQ domain; it reads FLRKVSTLQAGFRGFLVRRQFQSLRAEYEA. 5 disordered regions span residues 101–142, 230–264, 280–299, 327–355, and 376–418; these read QKKT…SVSK, HHAE…KGRE, SQAG…QPFK, AETQ…AGPC, and GSLD…LQWR. 2 stretches are compositionally biased toward polar residues: residues 129–142 and 249–259; these read KASQ…SVSK and SVTSAGKTTAG. Residues 141–176 adopt a coiled-coil conformation; it reads SKMENADLGLSQSQQELQEQRNHLAMELLWLQQAIN. A compositionally biased stretch (polar residues) spans 390-404; sequence PPSAGSSGHGNTSEL.

The protein is IQ domain-containing protein C (Iqcc) of Mus musculus (Mouse).